The following is a 191-amino-acid chain: Abscisic acid receptor PYR1 (191 aa).

Residues 23-176 (YQLDPGSCSS…NLQKLATVAE (154 aa)) are START-like. Lys59 lines the abscisate pocket. Residue Thr78 is modified to Phosphothreonine; by CARK1. The Gate loop motif lies at 85–89 (SGLPA). Abscisate is bound by residues 89–94 (ANTSTE), 116–122 (RLTNYKS), and Glu141. The short motif at 115-117 (HRL) is the Latch loop element.

This sequence belongs to the PYR/PYL/RCAR abscisic acid intracellular receptor family. In terms of assembly, homodimer. Binds ABA on one subunit only. Interacts with HAB1, AHG3, ABI1 and ABI2 when complexed to ABA, and possibly with other PP2Cs. Binds to CARs protein in an ABA-independent manner, both at the plasma membrane and in the nucleus. Interacts directly with CAR1 and CAR4. Interacts with CARK1 in the cytosol. Interacts with AIP1 in an abscisic acid-dependent manner. Interacts with FREE1 (via N-terminus). Interacts with the E3 ubiquitin-protein ligase RSL1 at the plasma membrane. Ubiquitynated and degraded by the proteasome upon binding to the E3 ubiquitin-protein ligase RSL1 at the plasma membrane. In terms of processing, phosphorylated by CARK1 especially in response to abscisic acid (ABA); this phosphorylation promotes its stability and inhibitory ability to ABI1.

It localises to the cytoplasm. Its subcellular location is the cytosol. The protein localises to the nucleus. The protein resides in the cell membrane. It is found in the vacuole. In terms of biological role, receptor for abscisic acid (ABA) required for ABA-mediated responses such as stomatal closure and germination inhibition. Inhibits the activity of group-A protein phosphatases type 2C (PP2Cs) when activated by ABA. Can be activated by both (-)-ABA and (+)-ABA. Promotes drought tolerance. The protein is Abscisic acid receptor PYR1 of Arabidopsis thaliana (Mouse-ear cress).